The sequence spans 391 residues: Phosphoglycerate kinase (391 aa).

Residues 21 to 23 (DLN), arginine 36, 59 to 62 (HLGR), arginine 113, and arginine 146 each bind substrate. Residues lysine 197, glutamate 319, and 345-348 (GGDT) each bind ATP.

The protein belongs to the phosphoglycerate kinase family. Monomer.

It is found in the cytoplasm. The catalysed reaction is (2R)-3-phosphoglycerate + ATP = (2R)-3-phospho-glyceroyl phosphate + ADP. It functions in the pathway carbohydrate degradation; glycolysis; pyruvate from D-glyceraldehyde 3-phosphate: step 2/5. This chain is Phosphoglycerate kinase, found in Shewanella sp. (strain MR-4).